The primary structure comprises 175 residues: Hypoxanthine-guanine phosphoribosyltransferase (175 aa).

Positions 40 and 41 each coordinate diphosphate. E96 and D97 together coordinate Mg(2+). Residue D100 is the Proton acceptor of the active site. GMP is bound by residues K128, 149 to 150 (FL), and D156. R162 is a binding site for diphosphate.

The protein belongs to the purine/pyrimidine phosphoribosyltransferase family. It depends on Mg(2+) as a cofactor.

It is found in the cytoplasm. The catalysed reaction is IMP + diphosphate = hypoxanthine + 5-phospho-alpha-D-ribose 1-diphosphate. It carries out the reaction GMP + diphosphate = guanine + 5-phospho-alpha-D-ribose 1-diphosphate. The protein operates within purine metabolism; IMP biosynthesis via salvage pathway; IMP from hypoxanthine: step 1/1. It functions in the pathway purine metabolism; GMP biosynthesis via salvage pathway; GMP from guanine: step 1/1. Its function is as follows. Purine salvage pathway enzyme that catalyzes the transfer of the ribosyl-5-phosphate group from 5-phospho-alpha-D-ribose 1-diphosphate (PRPP) to the N9 position of the 6-oxopurines hypoxanthine and guanine to form the corresponding ribonucleotides IMP (inosine 5'-monophosphate) and GMP (guanosine 5'-monophosphate), with the release of PPi. This chain is Hypoxanthine-guanine phosphoribosyltransferase (hpt), found in Mycoplasma genitalium (strain ATCC 33530 / DSM 19775 / NCTC 10195 / G37) (Mycoplasmoides genitalium).